Reading from the N-terminus, the 589-residue chain is Chromodomain Y-like protein (589 aa).

The segment covering 1 to 10 (MGLGSSQPST) has biased composition (polar residues). A disordered region spans residues 1–57 (MGLGSSQPSTKEAEPCTLQEKEEHPVDDTRQQNNAVPATVSDPDQVSPAVQDAETQV). A compositionally biased stretch (basic and acidic residues) spans 11 to 30 (KEAEPCTLQEKEEHPVDDTR). The region spanning 55-115 (TQVESIVDKR…RHNERQKEGT (61 aa)) is the Chromo domain. The interval 55-300 (TQVESIVDKR…TIQTSVTGVT (246 aa)) is interaction with EZH2. S82 bears the Phosphoserine mark. The tract at residues 110 to 155 (RQKEGTLARANRASPSNARKQISRSTHSALSKTNPKALVVGKDHES) is disordered. The span at 117-128 (ARANRASPSNAR) shows a compositional bias: low complexity. The residue at position 129 (K129) is an N6,N6,N6-trimethyllysine; by EHMT2; alternate. Position 129 is an N6,N6-dimethyllysine; by EHMT2; alternate (K129). An N6-methyllysine; by EHMT2; alternate modification is found at K129. Polar residues predominate over residues 132–143 (SRSTHSALSKTN). S164, S195, and S210 each carry phosphoserine. The interval 202–224 (SIDGFHGESPEKLDQGAEDTVTP) is disordered. The segment covering 206-216 (FHGESPEKLDQ) has biased composition (basic and acidic residues). The interval 353–585 (SENNSLNPEV…DSMLKYLQRK (233 aa)) is acetyl-CoA-binding domain.

Forms multimers and multimerization is required for stable binding to chromatin. Interacts with HDAC1 and HDAC2 via its C-terminal acetyl-CoA-binding domain. Interacts with EZH2, EED, SUZ12, REST, EHMT1 and EHMT2. Part of a complex containing at least CDYL, REST, WIZ, SETB1, EHMT1 and EHMT2. Part of a complex containing at least CDYL, MIER1, MIER2, HDAC1 and HDAC2. Interacts with CHAF1A and CHAF1B; bridging the CAF-1 complex to the MCM2-7 (MCM) complex. Interacts with MCM3 and MCM5; bridging the CAF-1 complex to the MCM2-7 (MCM) complex. Recruited to Xist RNA-coated X chromosome. Interacts with EHMT2 and PRDM9; interaction only takes place when PRDM9 is bound to hotspot DNA. In terms of tissue distribution, expressed in the brain, with expression in the hippocampal dentate gyrus, CA1, striatum and cortex (at protein level). Expressed in the prelimbic cortex.

It localises to the nucleus. The protein localises to the chromosome. It carries out the reaction 3-hydroxybutanoyl-CoA = (2E)-butenoyl-CoA + H2O. Its function is as follows. Chromatin reader protein that recognizes and binds histone H3 trimethylated at 'Lys-9', dimethylated at 'Lys-27' and trimethylated at 'Lys-27' (H3K9me3, H3K27me2 and H3K27me3, respectively). Part of multimeric repressive chromatin complexes, where it is required for transmission and restoration of repressive histone marks, thereby preserving the epigenetic landscape. Required for chromatin targeting and maximal enzymatic activity of Polycomb repressive complex 2 (PRC2); acts as a positive regulator of PRC2 activity by bridging the pre-existing histone H3K27me3 and newly recruited PRC2 on neighboring nucleosomes. Acts as a corepressor for REST by facilitating histone-lysine N-methyltransferase EHMT2 recruitment and H3K9 dimethylation at REST target genes for repression. Involved in X chromosome inactivation in females: recruited to Xist RNA-coated X chromosome and facilitates propagation of H3K9me2 by anchoring EHMT2. Promotes EZH2 accumulation and H3K27me3 methylation at DNA double strand breaks (DSBs), thereby facilitating transcriptional repression at sites of DNA damage and homology-directed repair of DSBs. Required for neuronal migration during brain development by repressing expression of RHOA. By repressing the expression of SCN8A, contributes to the inhibition of intrinsic neuronal excitability and epileptogenesis. In addition to acting as a chromatin reader, acts as a hydro-lyase. Shows crotonyl-coA hydratase activity by mediating the conversion of crotonyl-CoA ((2E)-butenoyl-CoA) to beta-hydroxybutyryl-CoA (3-hydroxybutanoyl-CoA), thereby acting as a negative regulator of histone crotonylation. Histone crotonylation is required during spermatogenesis; down-regulation of histone crotonylation by CDYL regulates the reactivation of sex chromosome-linked genes in round spermatids and histone replacement in elongating spermatids. By regulating histone crotonylation and trimethylation of H3K27, may be involved in stress-induced depression-like behaviors, possibly by regulating VGF expression. Displays acetyltransferase activity toward tubulin in vitro; such activity is however unsure in vivo and additional evidences would be required to confirm this result. Not able to recognize and bind histone H3K9me3, histone H3K27me2 and histone H3K27me3, due to the presence of a N-terminal extension that inactivates the chromo domain. This Rattus norvegicus (Rat) protein is Chromodomain Y-like protein.